The sequence spans 548 residues: Acetamidase (548 aa).

Active-site charge relay system residues include K129 and S204. S228 serves as the catalytic Acyl-ester intermediate.

The protein belongs to the amidase family.

It carries out the reaction a monocarboxylic acid amide + H2O = a monocarboxylate + NH4(+). It catalyses the reaction acetamide + H2O = acetate + NH4(+). In terms of biological role, allows acetamide to be used as a sole carbon or nitrogen source. This chain is Acetamidase (amdS), found in Emericella nidulans (strain FGSC A4 / ATCC 38163 / CBS 112.46 / NRRL 194 / M139) (Aspergillus nidulans).